Reading from the N-terminus, the 129-residue chain is Small ribosomal subunit protein uS11 (129 aa).

This sequence belongs to the universal ribosomal protein uS11 family. As to quaternary structure, part of the 30S ribosomal subunit. Interacts with proteins S7 and S18. Binds to IF-3.

Its function is as follows. Located on the platform of the 30S subunit, it bridges several disparate RNA helices of the 16S rRNA. Forms part of the Shine-Dalgarno cleft in the 70S ribosome. The chain is Small ribosomal subunit protein uS11 from Erwinia tasmaniensis (strain DSM 17950 / CFBP 7177 / CIP 109463 / NCPPB 4357 / Et1/99).